The sequence spans 451 residues: Protein NINJA homolog 1 (451 aa).

Disordered regions lie at residues 1-223 (MDDE…QGNP), 321-346 (ISQADDGKKTQEAGASSSALVEDDKK), and 427-451 (DAPGQENSATLPAFPVGNQAASAQN). Positions 23-35 (KARDAPLEPKAEP) are enriched in basic and acidic residues. 3 stretches are compositionally biased toward polar residues: residues 38–49 (EESSSKGVSQTP), 86–103 (PGSSSVPVADGSNEQKPV), and 143–153 (ISISTDDGSTG). The span at 154 to 163 (ENEDVAESEA) shows a compositional bias: acidic residues. Over residues 207 to 216 (SFSGSESSSG) the composition is skewed to low complexity.

This sequence belongs to the Ninja family. Interacts with TIFY10C/JAZ8. Interacts with TIFY11A/JAZ9.

The protein resides in the nucleus. The protein is Protein NINJA homolog 1 of Oryza sativa subsp. japonica (Rice).